A 51-amino-acid chain; its full sequence is uncharacterized protein (51 aa).

This is an uncharacterized protein from Dictyostelium discoideum (Social amoeba).